Consider the following 256-residue polypeptide: Hemin import ATP-binding protein HmuV (256 aa).

The region spanning 2–238 is the ABC transporter domain; the sequence is ISAQNLVYSL…QALTMLYGAD (237 aa). 34 to 41 is a binding site for ATP; that stretch reads GPNGAGKS.

It belongs to the ABC transporter superfamily. Heme (hemin) importer (TC 3.A.1.14.5) family. In terms of assembly, the complex is composed of two ATP-binding proteins (HmuV), two transmembrane proteins (HmuU) and a solute-binding protein (HmuT).

The protein localises to the cell inner membrane. Part of the ABC transporter complex HmuTUV involved in hemin import. Responsible for energy coupling to the transport system. The sequence is that of Hemin import ATP-binding protein HmuV from Shigella dysenteriae serotype 1 (strain Sd197).